The chain runs to 156 residues: MSLVIDFFDETEEVKEEYVNMIRELLEKAAQMEGVEDGTELSVTFVDNERIREINRDYRGKDQPTDVISFALEDMGEGEVEIIGADMPRMLGDLIISIPRTKEQAEEYGHSFDRELGFLALHGFLHLLGYDHMTEEDEKEMFGKQKEILGAFGLRR.

Positions 122, 126, and 132 each coordinate Zn(2+).

It belongs to the endoribonuclease YbeY family. The cofactor is Zn(2+).

Its subcellular location is the cytoplasm. Its function is as follows. Single strand-specific metallo-endoribonuclease involved in late-stage 70S ribosome quality control and in maturation of the 3' terminus of the 16S rRNA. The chain is Endoribonuclease YbeY from Bacillus cytotoxicus (strain DSM 22905 / CIP 110041 / 391-98 / NVH 391-98).